Reading from the N-terminus, the 406-residue chain is Kelch domain-containing protein 1 (406 aa).

6 Kelch repeats span residues 24–76 (FLYV…CGAC), 80–134 (RLYV…VYKD), 135–181 (RLIY…TKTR), 208–258 (KGYV…AITD), 260–307 (KLFL…ACLG), and 311–361 (EIMV…LKSQ).

In terms of assembly, component of a CRL5 E3 ubiquitin-protein ligase complex, also named ECS (Elongin BC-CUL2/5-SOCS-box protein) complex, composed of CUL5, Elongin BC (ELOB and ELOC), RBX1 and substrate-specific adapter KLHDC1.

The protein resides in the cytoplasm. It localises to the cytosol. The protein operates within protein modification; protein ubiquitination. Substrate-recognition component of a Cul5-RING (CRL5) E3 ubiquitin-protein ligase complex of the DesCEND (destruction via C-end degrons) pathway, which recognizes a C-degron located at the extreme C terminus of target proteins, leading to their ubiquitination and degradation. The C-degron recognized by the DesCEND pathway is usually a motif of less than ten residues and can be present in full-length proteins, truncated proteins or proteolytically cleaved forms. The CRL5(KLHDC1) complex mediates ubiquitination and degradation of truncated SELENOS selenoprotein produced by failed UGA/Sec decoding, which ends with a glycine. The sequence is that of Kelch domain-containing protein 1 from Mus musculus (Mouse).